The chain runs to 345 residues: Protease HtpX homolog (345 aa).

Transmembrane regions (helical) follow at residues 6 to 26 (TAMLLAFMTALFMGVGYLVGG) and 27 to 47 (SNGMVIALLMAGGLNFFSYWN). His130 serves as a coordination point for Zn(2+). Residue Glu131 is part of the active site. His134 contacts Zn(2+). A run of 2 helical transmembrane segments spans residues 145–165 (LTATIAGAISMLGNFAFFMGG) and 179–199 (IGGLLALFVAPFAAMLVQMAI). Zn(2+) is bound at residue Glu204.

This sequence belongs to the peptidase M48B family. The cofactor is Zn(2+).

The protein localises to the cell inner membrane. The sequence is that of Protease HtpX homolog from Bartonella henselae (strain ATCC 49882 / DSM 28221 / CCUG 30454 / Houston 1) (Rochalimaea henselae).